The sequence spans 85 residues: Small ribosomal subunit protein bS20 (85 aa).

The disordered stretch occupies residues 1 to 22 (MANIKSAIKRAKLSEERRAHNA).

The protein belongs to the bacterial ribosomal protein bS20 family.

Binds directly to 16S ribosomal RNA. The sequence is that of Small ribosomal subunit protein bS20 from Bacillus cytotoxicus (strain DSM 22905 / CIP 110041 / 391-98 / NVH 391-98).